Here is a 162-residue protein sequence, read N- to C-terminus: Flagellar assembly factor FliW (162 aa).

It belongs to the FliW family. Interacts with translational regulator CsrA and flagellin(s).

It is found in the cytoplasm. Functionally, acts as an anti-CsrA protein, binds CsrA and prevents it from repressing translation of its target genes, one of which is flagellin. Binds to flagellin and participates in the assembly of the flagellum. In Magnetococcus marinus (strain ATCC BAA-1437 / JCM 17883 / MC-1), this protein is Flagellar assembly factor FliW.